The chain runs to 739 residues: MSLMLEPNPTQIKEERIYAEMGLTDEEFAMIEKILGRLPNYTETGLFSVMWSEHCSYKNSKPVLRKFPTTGERVLQGPGEGAGIVDIGDNQAVVFKMESHNHPSAIEPYQGAATGVGGIIRDIFSMGARPVALLNSLRFGELQSPRVKYLFEEVVAGIAGYGNCIGIPTVGGEVQFDPCYEGNPLVNAMCVGLIHHEDIKKGQAHGAGNTVMYVGASTGRDGIHGATFASEELSESSEAKRPAVQVGDPFMEKLLIEACLELIQSDALVGIQDMGAAGLTSSSAEMASKAGMGIEMYLDDVPQRETGMTPYEMMLSESQERMLIVVKKGREQEVVELFEKYGLAAVAMGKVTEDKMLRLFHKGEMVAEVPADALAEEAPIYHKPSKEAAYFREFQEMKMKTPKVDNYKETLLALLQQPTIASKEWVYDQYDYQVRTSTVVTPGSDAAVVRVRGTEKALAITTDCNSRYIYLDPETGGKIAVAEAARNIVCSGGEPLAITDCLNFGNPEKPEIFWQIEKSVDGMSEACRTLQTPVIGGNVSMYNERSGEAVYPTPTVGMVGLVHDLKHVTTQEFKQAGDLIYVMGETKAEFGGSELQKMMYGKIFGQSPSIDLEVEAKRQKQLLEAIQAGLVQSAHDVAEGGLAVAIAESAIGAKGLGATVKLAGEATAALFAESQSRFVVTVKREQQEAFEKVVEAIQVGEVTNTNEVTIHNEENEVLLTANVDEMRKAWKGAIPCLLK.

Residue His54 is part of the active site. Positions 57 and 96 each coordinate ATP. Glu98 contributes to the Mg(2+) binding site. Residues Ser99–His102 and Arg121 each bind substrate. Catalysis depends on His100, which acts as the Proton acceptor. Asp122 contributes to the Mg(2+) binding site. Gln245 is a binding site for substrate. Residue Asp273 participates in Mg(2+) binding. Glu317–Gln319 serves as a coordination point for substrate. Residues Asp500 and Gly537 each coordinate ATP. Mg(2+) is bound at residue Asn538. Position 540 (Ser540) interacts with substrate.

The protein belongs to the FGAMS family. Monomer. Part of the FGAM synthase complex composed of 1 PurL, 1 PurQ and 2 PurS subunits.

It localises to the cytoplasm. It catalyses the reaction N(2)-formyl-N(1)-(5-phospho-beta-D-ribosyl)glycinamide + L-glutamine + ATP + H2O = 2-formamido-N(1)-(5-O-phospho-beta-D-ribosyl)acetamidine + L-glutamate + ADP + phosphate + H(+). The protein operates within purine metabolism; IMP biosynthesis via de novo pathway; 5-amino-1-(5-phospho-D-ribosyl)imidazole from N(2)-formyl-N(1)-(5-phospho-D-ribosyl)glycinamide: step 1/2. Functionally, part of the phosphoribosylformylglycinamidine synthase complex involved in the purines biosynthetic pathway. Catalyzes the ATP-dependent conversion of formylglycinamide ribonucleotide (FGAR) and glutamine to yield formylglycinamidine ribonucleotide (FGAM) and glutamate. The FGAM synthase complex is composed of three subunits. PurQ produces an ammonia molecule by converting glutamine to glutamate. PurL transfers the ammonia molecule to FGAR to form FGAM in an ATP-dependent manner. PurS interacts with PurQ and PurL and is thought to assist in the transfer of the ammonia molecule from PurQ to PurL. The chain is Phosphoribosylformylglycinamidine synthase subunit PurL from Bacillus cytotoxicus (strain DSM 22905 / CIP 110041 / 391-98 / NVH 391-98).